The chain runs to 130 residues: Small ribosomal subunit protein uS8 (130 aa).

This sequence belongs to the universal ribosomal protein uS8 family. Part of the 30S ribosomal subunit.

Its function is as follows. One of the primary rRNA binding proteins, it binds directly to 16S rRNA central domain where it helps coordinate assembly of the platform of the 30S subunit. The sequence is that of Small ribosomal subunit protein uS8 from Thermococcus onnurineus (strain NA1).